We begin with the raw amino-acid sequence, 129 residues long: Small ribosomal subunit protein uS11 (129 aa).

It belongs to the universal ribosomal protein uS11 family. Part of the 30S ribosomal subunit. Interacts with proteins S7 and S18. Binds to IF-3.

Functionally, located on the platform of the 30S subunit, it bridges several disparate RNA helices of the 16S rRNA. Forms part of the Shine-Dalgarno cleft in the 70S ribosome. The protein is Small ribosomal subunit protein uS11 of Oceanobacillus iheyensis (strain DSM 14371 / CIP 107618 / JCM 11309 / KCTC 3954 / HTE831).